A 237-amino-acid chain; its full sequence is Fibroblast growth factor 3 (237 aa).

Residues 1-21 (MVIIWILLLSFISCGPQVSWA) form the signal peptide. N-linked (GlcNAc...) asparagine glycosylation occurs at Asn83.

It belongs to the heparin-binding growth factors family.

In terms of biological role, plays an important role in the regulation of embryonic development, cell proliferation, and cell differentiation. The sequence is that of Fibroblast growth factor 3 (fgf3) from Xenopus laevis (African clawed frog).